Consider the following 177-residue polypeptide: MSDLTTIARPYAKAAFDFAVDKGELDQWGQMLTFAAEVAQNDDVHNLLSGSMTAEKLAEVFIVICGEQFDEFGQNLIKVMAENGRLMAFPDVCKEFFILKKEYEKEIDVEVTSAVELSEEQRAEISSKLEQRLARKVQLNCSIDETLLSGVIIRAGDLVIDNSARSRLDRLSDALQS.

This sequence belongs to the ATPase delta chain family. As to quaternary structure, F-type ATPases have 2 components, F(1) - the catalytic core - and F(0) - the membrane proton channel. F(1) has five subunits: alpha(3), beta(3), gamma(1), delta(1), epsilon(1). F(0) has three main subunits: a(1), b(2) and c(10-14). The alpha and beta chains form an alternating ring which encloses part of the gamma chain. F(1) is attached to F(0) by a central stalk formed by the gamma and epsilon chains, while a peripheral stalk is formed by the delta and b chains.

The protein localises to the cell inner membrane. Its function is as follows. F(1)F(0) ATP synthase produces ATP from ADP in the presence of a proton or sodium gradient. F-type ATPases consist of two structural domains, F(1) containing the extramembraneous catalytic core and F(0) containing the membrane proton channel, linked together by a central stalk and a peripheral stalk. During catalysis, ATP synthesis in the catalytic domain of F(1) is coupled via a rotary mechanism of the central stalk subunits to proton translocation. Functionally, this protein is part of the stalk that links CF(0) to CF(1). It either transmits conformational changes from CF(0) to CF(1) or is implicated in proton conduction. This is ATP synthase subunit delta 1 from Vibrio atlanticus (strain LGP32) (Vibrio splendidus (strain Mel32)).